A 282-amino-acid polypeptide reads, in one-letter code: 4-hydroxy-3-methylbut-2-enyl diphosphate reductase (282 aa).

C12 contributes to the [4Fe-4S] cluster binding site. Residues H40 and H72 each contribute to the (2E)-4-hydroxy-3-methylbut-2-enyl diphosphate site. Positions 40 and 72 each coordinate dimethylallyl diphosphate. H40 and H72 together coordinate isopentenyl diphosphate. [4Fe-4S] cluster is bound at residue C94. Residue H122 coordinates (2E)-4-hydroxy-3-methylbut-2-enyl diphosphate. A dimethylallyl diphosphate-binding site is contributed by H122. H122 is an isopentenyl diphosphate binding site. The Proton donor role is filled by E124. T160 is a binding site for (2E)-4-hydroxy-3-methylbut-2-enyl diphosphate. Position 188 (C188) interacts with [4Fe-4S] cluster. Positions 216, 218, and 260 each coordinate (2E)-4-hydroxy-3-methylbut-2-enyl diphosphate. S216, N218, and S260 together coordinate dimethylallyl diphosphate. Isopentenyl diphosphate is bound by residues S216, N218, and S260.

It belongs to the IspH family. [4Fe-4S] cluster is required as a cofactor.

It carries out the reaction isopentenyl diphosphate + 2 oxidized [2Fe-2S]-[ferredoxin] + H2O = (2E)-4-hydroxy-3-methylbut-2-enyl diphosphate + 2 reduced [2Fe-2S]-[ferredoxin] + 2 H(+). The catalysed reaction is dimethylallyl diphosphate + 2 oxidized [2Fe-2S]-[ferredoxin] + H2O = (2E)-4-hydroxy-3-methylbut-2-enyl diphosphate + 2 reduced [2Fe-2S]-[ferredoxin] + 2 H(+). It participates in isoprenoid biosynthesis; dimethylallyl diphosphate biosynthesis; dimethylallyl diphosphate from (2E)-4-hydroxy-3-methylbutenyl diphosphate: step 1/1. It functions in the pathway isoprenoid biosynthesis; isopentenyl diphosphate biosynthesis via DXP pathway; isopentenyl diphosphate from 1-deoxy-D-xylulose 5-phosphate: step 6/6. Its function is as follows. Catalyzes the conversion of 1-hydroxy-2-methyl-2-(E)-butenyl 4-diphosphate (HMBPP) into a mixture of isopentenyl diphosphate (IPP) and dimethylallyl diphosphate (DMAPP). Acts in the terminal step of the DOXP/MEP pathway for isoprenoid precursor biosynthesis. This is 4-hydroxy-3-methylbut-2-enyl diphosphate reductase from Geobacter sulfurreducens (strain ATCC 51573 / DSM 12127 / PCA).